The chain runs to 38 residues: Large ribosomal subunit protein bL36 (38 aa).

The protein belongs to the bacterial ribosomal protein bL36 family.

The protein is Large ribosomal subunit protein bL36 of Prochlorococcus marinus (strain MIT 9312).